Consider the following 368-residue polypeptide: tRNA-specific 2-thiouridylase MnmA (368 aa).

ATP contacts are provided by residues 12-19 (AMSGGVDS) and Met-38. Cys-110 serves as the catalytic Nucleophile. The cysteines at positions 110 and 207 are disulfide-linked. Gly-134 serves as a coordination point for ATP. The interaction with tRNA stretch occupies residues 157–159 (KDQ). The active-site Cysteine persulfide intermediate is the Cys-207. Residues 312 to 313 (RY) form an interaction with tRNA region.

This sequence belongs to the MnmA/TRMU family.

It localises to the cytoplasm. It catalyses the reaction S-sulfanyl-L-cysteinyl-[protein] + uridine(34) in tRNA + AH2 + ATP = 2-thiouridine(34) in tRNA + L-cysteinyl-[protein] + A + AMP + diphosphate + H(+). In terms of biological role, catalyzes the 2-thiolation of uridine at the wobble position (U34) of tRNA, leading to the formation of s(2)U34. This chain is tRNA-specific 2-thiouridylase MnmA, found in Geobacter metallireducens (strain ATCC 53774 / DSM 7210 / GS-15).